The following is a 362-amino-acid chain: Microfibril-associated glycoprotein 3 (362 aa).

The first 19 residues, M1–A19, serve as a signal peptide directing secretion. Residues F20–D146 are Extracellular-facing. N-linked (GlcNAc...) asparagine glycans are attached at residues N36, N41, and N110. The 93-residue stretch at P45–T137 folds into the Ig-like C2-type domain. An intrachain disulfide couples C73 to C124. Residues M147 to V167 form a helical membrane-spanning segment. Residues T168 to L362 are Cytoplasmic-facing. Disordered regions lie at residues G282 to N306 and H319 to L362. The span at H319–F337 shows a compositional bias: polar residues.

In terms of processing, glycosylated.

The protein resides in the cell membrane. Its function is as follows. Component of the elastin-associated microfibrils. This chain is Microfibril-associated glycoprotein 3 (MFAP3), found in Pongo abelii (Sumatran orangutan).